We begin with the raw amino-acid sequence, 156 residues long: 6,7-dimethyl-8-ribityllumazine synthase (156 aa).

5-amino-6-(D-ribitylamino)uracil contacts are provided by residues Phe-23, 57 to 59, and 81 to 83; these read AFE and TVI. 86 to 87 contributes to the (2S)-2-hydroxy-3-oxobutyl phosphate binding site; it reads ST. His-89 (proton donor) is an active-site residue. 5-amino-6-(D-ribitylamino)uracil is bound at residue Phe-114. Arg-128 is a binding site for (2S)-2-hydroxy-3-oxobutyl phosphate.

Belongs to the DMRL synthase family. As to quaternary structure, forms an icosahedral capsid composed of 60 subunits, arranged as a dodecamer of pentamers.

It carries out the reaction (2S)-2-hydroxy-3-oxobutyl phosphate + 5-amino-6-(D-ribitylamino)uracil = 6,7-dimethyl-8-(1-D-ribityl)lumazine + phosphate + 2 H2O + H(+). The protein operates within cofactor biosynthesis; riboflavin biosynthesis; riboflavin from 2-hydroxy-3-oxobutyl phosphate and 5-amino-6-(D-ribitylamino)uracil: step 1/2. In terms of biological role, catalyzes the formation of 6,7-dimethyl-8-ribityllumazine by condensation of 5-amino-6-(D-ribitylamino)uracil with 3,4-dihydroxy-2-butanone 4-phosphate. This is the penultimate step in the biosynthesis of riboflavin. This Shouchella clausii (strain KSM-K16) (Alkalihalobacillus clausii) protein is 6,7-dimethyl-8-ribityllumazine synthase.